The sequence spans 57 residues: Serine protease inhibitor Kazal-type 1 (57 aa).

One can recognise a Kazal-like domain in the interval Leu4 to Cys57. 3 disulfide bridges follow: Cys10–Cys39, Cys17–Cys36, and Cys25–Cys57.

It localises to the secreted. Serine protease inhibitor which exhibits anti-trypsin activity. In the pancreas, protects against trypsin-catalyzed premature activation of zymogens. Functionally, in the male reproductive tract, binds to sperm heads where it modulates sperm capacitance by inhibiting calcium uptake and nitrogen oxide (NO) production. This Canis lupus familiaris (Dog) protein is Serine protease inhibitor Kazal-type 1 (SPINK1).